Reading from the N-terminus, the 198-residue chain is Holliday junction branch migration complex subunit RuvA (198 aa).

The tract at residues 1 to 61 (MYEYFEGIIQ…DNDQTLYGFE (61 aa)) is domain I. The interval 62–140 (GAADKRTFNQ…TDGQPAAAAI (79 aa)) is domain II. The interval 141-145 (APVAS) is flexible linker. The segment at 146–198 (DVDSELADALAALVALGYPQRTVDGLTDTLKAFSAKTTDAYLREGLRLLSGKA) is domain III.

Belongs to the RuvA family. In terms of assembly, homotetramer. Forms an RuvA(8)-RuvB(12)-Holliday junction (HJ) complex. HJ DNA is sandwiched between 2 RuvA tetramers; dsDNA enters through RuvA and exits via RuvB. An RuvB hexamer assembles on each DNA strand where it exits the tetramer. Each RuvB hexamer is contacted by two RuvA subunits (via domain III) on 2 adjacent RuvB subunits; this complex drives branch migration. In the full resolvosome a probable DNA-RuvA(4)-RuvB(12)-RuvC(2) complex forms which resolves the HJ.

It localises to the cytoplasm. Functionally, the RuvA-RuvB-RuvC complex processes Holliday junction (HJ) DNA during genetic recombination and DNA repair, while the RuvA-RuvB complex plays an important role in the rescue of blocked DNA replication forks via replication fork reversal (RFR). RuvA specifically binds to HJ cruciform DNA, conferring on it an open structure. The RuvB hexamer acts as an ATP-dependent pump, pulling dsDNA into and through the RuvAB complex. HJ branch migration allows RuvC to scan DNA until it finds its consensus sequence, where it cleaves and resolves the cruciform DNA. This is Holliday junction branch migration complex subunit RuvA from Lacticaseibacillus casei (strain BL23) (Lactobacillus casei).